We begin with the raw amino-acid sequence, 42 residues long: CAKKREWCAKTEDCCCPMKCIYAWYNEQSSCQTTFSGMFKKC.

Intrachain disulfides connect C1–C15, C8–C20, C14–C31, and C16–C42.

This sequence belongs to the neurotoxin 06 (delta-actx) family. In terms of tissue distribution, expressed by the venom gland.

Its subcellular location is the secreted. In terms of biological role, neurotoxin that slows the inactivation of vertebrate tetrodotoxin-sensitive voltage-gated sodium channels (Nav) and most likely insect sodium channels presumably by binding to site 3 of the channel. Effects are an increase in resting tension, a muscle fasciculation and a decrease in indirect twitch tension. It fails to affect tetrodotoxin-resistant sodium currents. In vivo, is lethal to both vertebrates and insects. The chain is Delta-actinopoditoxin-Mb1a from Missulena bradleyi (Eastern mouse spider).